A 260-amino-acid chain; its full sequence is Putative protein phosphatase 2C-like protein 44 (260 aa).

In terms of domain architecture, PPM-type phosphatase spans 41–259; that stretch reads YYTVDRLSYA…SSISCVVIRF (219 aa).

The protein belongs to the PP2C family.

In Arabidopsis thaliana (Mouse-ear cress), this protein is Putative protein phosphatase 2C-like protein 44.